The sequence spans 451 residues: Type 3 secretion system ATPase (451 aa).

ATP is bound at residue G184–T189.

The protein belongs to the ATPase alpha/beta chains family. T3SS ATPase subfamily. As to quaternary structure, the core secretion machinery of the T3SS is composed of approximately 20 different proteins, including cytoplasmic components, a base, an export apparatus and a needle. This subunit is part of the cytosolic complex. Forms homohexamers.

It localises to the cytoplasm. The enzyme catalyses ATP + H2O + cellular proteinSide 1 = ADP + phosphate + cellular proteinSide 2.. ATPase component of the type III secretion system (T3SS), also called injectisome, which is used to inject bacterial effector proteins into eukaryotic host cells. Acts as a molecular motor to provide the energy that is required for the export of proteins. Required for type III secretion apparatus (T3SA) formation, proper protein secretion, host cell invasion and virulence. May play a critical role in T3SS substrate recognition, disassembly of the effector/chaperone complex and unfolding of the effector in an ATP-dependent manner prior to secretion. The polypeptide is Type 3 secretion system ATPase (Sinorhizobium fredii (strain NBRC 101917 / NGR234)).